Reading from the N-terminus, the 330-residue chain is MRSTLVTGLIAGLLSQQAAAHATFQALWVDGADYGSQCARVPPSNSPVTDVTSNAMRCNTGTSPVAKKCPVKAGSTVTVEMHQQANDRSCSSEAIGGAHYGPVLVYMSKVSDAASADGSSGWFKIFEDTWAKKPSSSSGDDDFWGVKDLNSCCGKMQVKIPSDIPAGDYLLRAEVIALHTAASAGGAQLYMTCYQISVTGGGSATPATVSFPGAYKSSDPGILVDIHSAMSTYVAPGPAVYSGGSSKKAGSGCVGCESTCKVGSGPTGTASAVPVASTSAAAGGGGGGGSGGCSVAKYQQCGGTGYTGCTSCASGSTCSAVSPPYYSQCV.

The signal sequence occupies residues 1–20; it reads MRSTLVTGLIAGLLSQQAAA. Residues histidine 21 and histidine 99 each coordinate Cu(2+). Cysteine 58 and cysteine 193 are joined by a disulfide. Residues histidine 179 and glutamine 188 each coordinate O2. Residue tyrosine 190 coordinates Cu(2+). Positions 293–330 constitute a CBM1 domain; the sequence is CSVAKYQQCGGTGYTGCTSCASGSTCSAVSPPYYSQCV.

The protein belongs to the polysaccharide monooxygenase AA9 family. Cu(2+) serves as cofactor.

The protein resides in the secreted. It carries out the reaction [(1-&gt;4)-beta-D-glucosyl]n+m + reduced acceptor + O2 = 4-dehydro-beta-D-glucosyl-[(1-&gt;4)-beta-D-glucosyl]n-1 + [(1-&gt;4)-beta-D-glucosyl]m + acceptor + H2O.. In terms of biological role, lytic polysaccharide monooxygenase (LPMO) that depolymerizes crystalline and amorphous polysaccharides via the oxidation of scissile alpha- or beta-(1-4)-glycosidic bonds, yielding exclusively C1 oxidation products. Catalysis by LPMOs requires the reduction of the active-site copper from Cu(II) to Cu(I) by a reducing agent and H(2)O(2) or O(2) as a cosubstrate. The chain is AA9 family lytic polysaccharide monooxygenase E (gh61-5) from Neurospora crassa (strain ATCC 24698 / 74-OR23-1A / CBS 708.71 / DSM 1257 / FGSC 987).